Consider the following 400-residue polypeptide: Pectinesterase B (400 aa).

Substrate-binding residues include Thr-171 and Gln-205. Asp-228 acts as the Proton donor in catalysis. Asp-261 serves as the catalytic Nucleophile. The substrate site is built by Arg-325 and Trp-327.

It belongs to the pectinesterase family.

It catalyses the reaction [(1-&gt;4)-alpha-D-galacturonosyl methyl ester](n) + n H2O = [(1-&gt;4)-alpha-D-galacturonosyl](n) + n methanol + n H(+). The protein operates within glycan metabolism; pectin degradation; 2-dehydro-3-deoxy-D-gluconate from pectin: step 1/5. This is Pectinesterase B (pemB) from Pectobacterium parmentieri.